A 178-amino-acid polypeptide reads, in one-letter code: Interleukin-10 (178 aa).

An N-terminal signal peptide occupies residues 1 to 18 (MHSSALLCCLVFLTGVRA). 2 disulfides stabilise this stretch: C30/C126 and C80/C132. The N-linked (GlcNAc...) asparagine glycan is linked to N134.

The protein belongs to the IL-10 family. In terms of assembly, homodimer. Interacts with IL10RA and IL10RB.

It localises to the secreted. Major immune regulatory cytokine that acts on many cells of the immune system where it has profound anti-inflammatory functions, limiting excessive tissue disruption caused by inflammation. Mechanistically, IL10 binds to its heterotetrameric receptor comprising IL10RA and IL10RB leading to JAK1 and STAT2-mediated phosphorylation of STAT3. In turn, STAT3 translocates to the nucleus where it drives expression of anti-inflammatory mediators. Targets antigen-presenting cells (APCs) such as macrophages and monocytes and inhibits their release of pro-inflammatory cytokines including granulocyte-macrophage colony-stimulating factor /GM-CSF, granulocyte colony-stimulating factor/G-CSF, IL-1 alpha, IL-1 beta, IL-6, IL-8 and TNF-alpha. Also interferes with antigen presentation by reducing the expression of MHC-class II and co-stimulatory molecules, thereby inhibiting their ability to induce T cell activation. In addition, controls the inflammatory response of macrophages by reprogramming essential metabolic pathways including mTOR signaling. The polypeptide is Interleukin-10 (IL10) (Saimiri sciureus (Common squirrel monkey)).